The sequence spans 191 residues: Cell division protein SepF (191 aa).

Positions 157 to 178 (YLNESPAQPVQTTTSFGRTATP) are enriched in polar residues. The segment at 157–191 (YLNESPAQPVQTTTSFGRTATPTPAWGTDSRYAAQ) is disordered.

Belongs to the SepF family. Homodimer. Interacts with FtsZ.

The protein localises to the cytoplasm. Cell division protein that is part of the divisome complex and is recruited early to the Z-ring. Probably stimulates Z-ring formation, perhaps through the cross-linking of FtsZ protofilaments. Its function overlaps with FtsA. This Synechococcus elongatus (strain ATCC 33912 / PCC 7942 / FACHB-805) (Anacystis nidulans R2) protein is Cell division protein SepF.